Here is a 471-residue protein sequence, read N- to C-terminus: Amidophosphoribosyltransferase (471 aa).

C2 serves as the catalytic Nucleophile. The Glutamine amidotransferase type-2 domain occupies 2–224; that stretch reads CGIFGIYSYE…PGEIIEIKDG (223 aa). [4Fe-4S] cluster is bound at residue C255. Residues S302, D364, and D365 each contribute to the Mg(2+) site. C401, C450, and C453 together coordinate [4Fe-4S] cluster.

It in the C-terminal section; belongs to the purine/pyrimidine phosphoribosyltransferase family. Mg(2+) is required as a cofactor. Requires [4Fe-4S] cluster as cofactor.

The catalysed reaction is 5-phospho-beta-D-ribosylamine + L-glutamate + diphosphate = 5-phospho-alpha-D-ribose 1-diphosphate + L-glutamine + H2O. Its pathway is purine metabolism; IMP biosynthesis via de novo pathway; N(1)-(5-phospho-D-ribosyl)glycinamide from 5-phospho-alpha-D-ribose 1-diphosphate: step 1/2. Catalyzes the formation of phosphoribosylamine from phosphoribosylpyrophosphate (PRPP) and glutamine. This Methanocaldococcus jannaschii (strain ATCC 43067 / DSM 2661 / JAL-1 / JCM 10045 / NBRC 100440) (Methanococcus jannaschii) protein is Amidophosphoribosyltransferase.